A 190-amino-acid polypeptide reads, in one-letter code: Potassium-transporting ATPase KdpC subunit (190 aa).

The chain crosses the membrane as a helical span at residues 13-33 (IGFLLLTLVCGVLYPGVVTVF).

Belongs to the KdpC family. The system is composed of three essential subunits: KdpA, KdpB and KdpC.

The protein resides in the cell membrane. In terms of biological role, part of the high-affinity ATP-driven potassium transport (or Kdp) system, which catalyzes the hydrolysis of ATP coupled with the electrogenic transport of potassium into the cytoplasm. This subunit acts as a catalytic chaperone that increases the ATP-binding affinity of the ATP-hydrolyzing subunit KdpB by the formation of a transient KdpB/KdpC/ATP ternary complex. This Listeria monocytogenes serovar 1/2a (strain ATCC BAA-679 / EGD-e) protein is Potassium-transporting ATPase KdpC subunit.